Here is a 233-residue protein sequence, read N- to C-terminus: 2,3,4,5-tetrahydropyridine-2,6-dicarboxylate N-acetyltransferase (233 aa).

Belongs to the transferase hexapeptide repeat family. DapH subfamily.

The catalysed reaction is (S)-2,3,4,5-tetrahydrodipicolinate + acetyl-CoA + H2O = L-2-acetamido-6-oxoheptanedioate + CoA. It participates in amino-acid biosynthesis; L-lysine biosynthesis via DAP pathway; LL-2,6-diaminopimelate from (S)-tetrahydrodipicolinate (acetylase route): step 1/3. Functionally, catalyzes the transfer of an acetyl group from acetyl-CoA to tetrahydrodipicolinate. The chain is 2,3,4,5-tetrahydropyridine-2,6-dicarboxylate N-acetyltransferase from Thermotoga sp. (strain RQ2).